Here is a 52-residue protein sequence, read N- to C-terminus: Mitogenic lectin alpha chain (52 aa).

It belongs to the leguminous lectin family. In terms of assembly, tetramer of two alpha and two beta chains.

The protein is Mitogenic lectin alpha chain of Vicia sativa (Spring vetch).